A 358-amino-acid polypeptide reads, in one-letter code: Gibberellin 3-beta-dioxygenase 1 (358 aa).

The 105-residue stretch at 204 to 308 (DLNWAQAALQ…RLSVAFLWGP (105 aa)) folds into the Fe2OG dioxygenase domain. His-232, Asp-234, and His-289 together coordinate Fe cation. Arg-299 is a catalytic residue.

This sequence belongs to the iron/ascorbate-dependent oxidoreductase family. GA3OX subfamily. It depends on L-ascorbate as a cofactor. The cofactor is Fe cation. Expressed in stems, roots, leaves, flowers, and siliques. Highly expressed near the nodes in stems and in the stamen filaments of flowers. Detected in developing cotyledons, vegetative shoot apical meristem and non-meristematic, non-elongation regions of the roots. Found in the cortex and the endodermis of the embryo axis in germinating seeds and in the placenta in developing siliques.

It carries out the reaction gibberellin A9 + 2-oxoglutarate + O2 = gibberellin A4 + succinate + CO2. The enzyme catalyses gibberellin A20 + 2-oxoglutarate + O2 = gibberellin A1 + succinate + CO2. It functions in the pathway plant hormone biosynthesis; gibberellin biosynthesis. In terms of biological role, converts the inactive gibberellin (GA) precursors GA9 and GA20 into the bioactives gibberellins GA4 and GA1, respectively. Involved in the production of bioactive GA for vegetative growth and development. The protein is Gibberellin 3-beta-dioxygenase 1 (GA3OX1) of Arabidopsis thaliana (Mouse-ear cress).